A 611-amino-acid polypeptide reads, in one-letter code: Fatty acid photodecarboxylase, chloroplastic (611 aa).

A disordered region spans residues 1 to 22 (MMLGPKTVTRGATKGAAPRSMA). The transit peptide at 1–36 (MMLGPKTVTRGATKGAAPRSMAARRVGGARRLSVRA) directs the protein to the chloroplast. FAD is bound by residues 55–56 (TA), Glu-76, Met-125, Ser-129, and 133–136 (NATL). The hexadecanoate site is built by Cys-392, Arg-412, Tyr-427, and Gln-447. Gly-582 serves as a coordination point for FAD.

Belongs to the GMC oxidoreductase family. It depends on FAD as a cofactor.

Its subcellular location is the plastid. The protein localises to the chloroplast. The catalysed reaction is a long-chain fatty acid + hnu + H(+) = a long-chain alkane + CO2. It catalyses the reaction hnu + hexadecanoate + H(+) = pentadecane + CO2. Activated by blue light and repressed by red light. In terms of biological role, catalyzes the decarboxylation of free fatty acids to n-alkanes or n-alkenes in response to blue light. Substrate preference is toward fatty acids with C17 or C18 chains. Saturated fatty acids are converted to alkanes, not alkenes. The decarboxylation is initiated through electron abstraction from the fatty acid by the photo-excited FAD. This is Fatty acid photodecarboxylase, chloroplastic from Chlamydomonas reinhardtii (Chlamydomonas smithii).